A 395-amino-acid polypeptide reads, in one-letter code: Phosphopentomutase (395 aa).

Residues Asp14, Asp289, His294, Asp330, His331, and His342 each coordinate Mn(2+).

This sequence belongs to the phosphopentomutase family. The cofactor is Mn(2+).

It is found in the cytoplasm. It catalyses the reaction 2-deoxy-alpha-D-ribose 1-phosphate = 2-deoxy-D-ribose 5-phosphate. The catalysed reaction is alpha-D-ribose 1-phosphate = D-ribose 5-phosphate. It participates in carbohydrate degradation; 2-deoxy-D-ribose 1-phosphate degradation; D-glyceraldehyde 3-phosphate and acetaldehyde from 2-deoxy-alpha-D-ribose 1-phosphate: step 1/2. Functionally, isomerase that catalyzes the conversion of deoxy-ribose 1-phosphate (dRib-1-P) and ribose 1-phosphate (Rib-1-P) to deoxy-ribose 5-phosphate (dRib-5-P) and ribose 5-phosphate (Rib-5-P), respectively. The polypeptide is Phosphopentomutase (Mycoplasmopsis pulmonis (strain UAB CTIP) (Mycoplasma pulmonis)).